We begin with the raw amino-acid sequence, 101 residues long: Urease subunit beta (101 aa).

This sequence belongs to the urease beta subunit family. In terms of assembly, heterotrimer of UreA (gamma), UreB (beta) and UreC (alpha) subunits. Three heterotrimers associate to form the active enzyme.

The protein localises to the cytoplasm. The catalysed reaction is urea + 2 H2O + H(+) = hydrogencarbonate + 2 NH4(+). It functions in the pathway nitrogen metabolism; urea degradation; CO(2) and NH(3) from urea (urease route): step 1/1. The polypeptide is Urease subunit beta (Rhizobium etli (strain CIAT 652)).